We begin with the raw amino-acid sequence, 116 residues long: Large ribosomal subunit protein uL18 (116 aa).

Belongs to the universal ribosomal protein uL18 family. As to quaternary structure, part of the 50S ribosomal subunit; part of the 5S rRNA/L5/L18/L25 subcomplex. Contacts the 5S and 23S rRNAs.

Its function is as follows. This is one of the proteins that bind and probably mediate the attachment of the 5S RNA into the large ribosomal subunit, where it forms part of the central protuberance. In Shewanella frigidimarina (strain NCIMB 400), this protein is Large ribosomal subunit protein uL18.